Consider the following 2194-residue polypeptide: Supervillin (2194 aa).

The interaction with MYLK stretch occupies residues 1 to 174; it reads MKRKERIARR…SSYSRTELSG (174 aa). 8 disordered regions span residues 35–98, 118–335, 388–414, 450–500, 513–563, 589–667, 685–719, and 739–791; these read LEED…TQSL, EKYG…QRRH, PESISEGSWVGPAPQTVTKPPPSKVLE, EDRG…TERM, AVSQ…QTSK, RASR…KVDE, KSFDEKSVPKRRSRNAAVEQRLRRLQDRSHTQPVT, and HPVM…DSST. Position 50 is a phosphoserine (Ser-50). The segment covering 87 to 98 has biased composition (polar residues); it reads PYSSGIMDTQSL. 2 stretches are compositionally biased toward basic and acidic residues: residues 139–161 and 181–192; these read SRKDPEAAEKRGVRSERSAESSR and ESKDYGLHRSDG. A phosphoserine mark is found at Ser-245 and Ser-262. Composition is skewed to basic and acidic residues over residues 283–294 and 308–319; these read PKHEWFLQKDSE and KVREKLVREESA. A compositionally biased stretch (polar residues) spans 320-330; sequence RSSPELTSESL. Residues Ser-321 and Ser-322 each carry the phosphoserine modification. Residues 455–467 show a composition bias toward polar residues; it reads GRSQEAPSGTEDL. The span at 540-551 shows a compositional bias: low complexity; that stretch reads PPQLQALKAKAP. Composition is skewed to basic and acidic residues over residues 592–615 and 626–635; these read RKPELHSRVEGSSEGPGVERERGS and ENRKTSERFR. 2 positions are modified to phosphoserine: Ser-652 and Ser-686. The span at 704-714 shows a compositional bias: basic and acidic residues; it reads QRLRRLQDRSH. 2 positions are modified to phosphoserine: Ser-747 and Ser-781. The span at 770–782 shows a compositional bias: basic and acidic residues; it reads LARDQTNESKDSA. Position 829 is a phosphotyrosine (Tyr-829). At Thr-831 the chain carries Phosphothreonine. A phosphoserine mark is found at Ser-893, Ser-899, Ser-903, Ser-947, Ser-979, and Ser-1031. The disordered stretch occupies residues 1036–1077; the sequence is EFGEPTSEQTGAAAGKPAAPTATPVSWKPQDPSEQPQEKRYQ. Positions 1045–1059 are enriched in low complexity; that stretch reads TGAAAGKPAAPTATP. A phosphoserine mark is found at Ser-1099 and Ser-1205. Position 1210 is a phosphothreonine (Thr-1210). Phosphoserine is present on residues Ser-1214, Ser-1302, and Ser-1385. Positions 1399 to 1667 are interaction with NEB; it reads SNVSLRSVNL…KFLDWTELKR (269 aa). Gelsolin-like repeat units lie at residues 1421-1520, 1540-1662, 1732-1842, 1861-1962, and 1995-2102; these read KKLM…LGGQ, IETN…FLDW, ISVD…FQGG, WRLY…LGRR, and ATEF…FPSW. An HP domain is found at 2131 to 2194; the sequence is KLCKTIYPLA…VNLKKAKGLF (64 aa).

It belongs to the villin/gelsolin family. Associates with F-actin. Interacts with NEB. Interacts with MYH9. Interacts with MYLK. Interacts with TASOR. As to quaternary structure, interacts with TRIP6 and DYNLT1. Interacts with KIF14; at midbody during cytokinesis.

It is found in the cell membrane. The protein resides in the cytoplasm. The protein localises to the cytoskeleton. Its subcellular location is the cell projection. It localises to the invadopodium. It is found in the podosome. The protein resides in the midbody. The protein localises to the cleavage furrow. In terms of biological role, forms a high-affinity link between the actin cytoskeleton and the membrane. Is among the first costameric proteins to assemble during myogenesis and it contributes to myogenic membrane structure and differentiation. Appears to be involved in myosin II assembly. May modulate myosin II regulation through MLCK during cell spreading, an initial step in cell migration. May play a role in invadopodial function. Functionally, may be involved in modulation of focal adhesions. Supervillin-mediated down-regulation of focal adhesions involves binding to TRIP6. Plays a role in cytokinesis through KIF14 interaction. The chain is Supervillin from Bos taurus (Bovine).